The chain runs to 188 residues: Elongation factor P (188 aa).

It belongs to the elongation factor P family.

The protein resides in the cytoplasm. It functions in the pathway protein biosynthesis; polypeptide chain elongation. Involved in peptide bond synthesis. Stimulates efficient translation and peptide-bond synthesis on native or reconstituted 70S ribosomes in vitro. Probably functions indirectly by altering the affinity of the ribosome for aminoacyl-tRNA, thus increasing their reactivity as acceptors for peptidyl transferase. In Chlorobaculum tepidum (strain ATCC 49652 / DSM 12025 / NBRC 103806 / TLS) (Chlorobium tepidum), this protein is Elongation factor P.